Here is a 512-residue protein sequence, read N- to C-terminus: Cytochrome P450 76C1 (512 aa).

A helical membrane pass occupies residues 3-23; the sequence is IISGQALLLLFCFILSCFLIF. Cysteine 450 is a heme binding site.

The protein belongs to the cytochrome P450 family. Heme serves as cofactor.

The protein resides in the membrane. This Arabidopsis thaliana (Mouse-ear cress) protein is Cytochrome P450 76C1 (CYP76C1).